The sequence spans 553 residues: Arginine--tRNA ligase (553 aa).

Residues 130–140 (ANPTGDLHIGH) carry the 'HIGH' region motif.

This sequence belongs to the class-I aminoacyl-tRNA synthetase family. In terms of assembly, monomer.

The protein localises to the cytoplasm. The enzyme catalyses tRNA(Arg) + L-arginine + ATP = L-arginyl-tRNA(Arg) + AMP + diphosphate. The polypeptide is Arginine--tRNA ligase (Staphylococcus aureus (strain MRSA252)).